The following is a 440-amino-acid chain: Chromosomal replication initiator protein DnaA (440 aa).

The segment at 1-69 (MKERILQEIK…VKVVLGNDAT (69 aa)) is domain I, interacts with DnaA modulators. The segment at 69–96 (TFEITYEAFEPHSSYSEPLVKKRAVLLT) is domain II. The interval 97 to 313 (PLNPDYTFEN…GAIIKLLVYK (217 aa)) is domain III, AAA+ region. ATP-binding residues include Gly140, Gly142, Lys143, and Thr144. The domain IV, binds dsDNA stretch occupies residues 314–440 (ETTGKEVDLR…GEISKRALSG (127 aa)).

It belongs to the DnaA family. As to quaternary structure, oligomerizes as a right-handed, spiral filament on DNA at oriC.

The protein resides in the cytoplasm. Plays an essential role in the initiation and regulation of chromosomal replication. ATP-DnaA binds to the origin of replication (oriC) to initiate formation of the DNA replication initiation complex once per cell cycle. Binds the DnaA box (a 9 base pair repeat at the origin) and separates the double-stranded (ds)DNA. Forms a right-handed helical filament on oriC DNA; dsDNA binds to the exterior of the filament while single-stranded (ss)DNA is stabiized in the filament's interior. The ATP-DnaA-oriC complex binds and stabilizes one strand of the AT-rich DNA unwinding element (DUE), permitting loading of DNA polymerase. After initiation quickly degrades to an ADP-DnaA complex that is not apt for DNA replication. Binds acidic phospholipids. The protein is Chromosomal replication initiator protein DnaA of Thermotoga petrophila (strain ATCC BAA-488 / DSM 13995 / JCM 10881 / RKU-1).